The sequence spans 489 residues: Betaine aldehyde dehydrogenase (489 aa).

K(+) contacts are provided by Thr-26 and Asp-93. An NAD(+)-binding site is contributed by 150–152 (GAW). Lys-162 (charge relay system) is an active-site residue. Position 176-179 (176-179 (KPSE)) interacts with NAD(+). Val-180 is a K(+) binding site. 229-232 (GVET) contributes to the NAD(+) binding site. Leu-245 provides a ligand contact to K(+). Residue Glu-251 is the Proton acceptor of the active site. NAD(+) is bound by residues Gly-253, Cys-285, and Glu-386. Cys-285 acts as the Nucleophile in catalysis. Cys-285 bears the Cysteine sulfenic acid (-SOH) mark. K(+) is bound by residues Lys-456 and Gly-459. Glu-463 serves as the catalytic Charge relay system.

Belongs to the aldehyde dehydrogenase family. Dimer of dimers. Requires K(+) as cofactor.

It carries out the reaction betaine aldehyde + NAD(+) + H2O = glycine betaine + NADH + 2 H(+). It functions in the pathway amine and polyamine biosynthesis; betaine biosynthesis via choline pathway; betaine from betaine aldehyde: step 1/1. Involved in the biosynthesis of the osmoprotectant glycine betaine. Catalyzes the irreversible oxidation of betaine aldehyde to the corresponding acid. The polypeptide is Betaine aldehyde dehydrogenase (Burkholderia vietnamiensis (strain G4 / LMG 22486) (Burkholderia cepacia (strain R1808))).